The chain runs to 398 residues: 1-deoxy-D-xylulose 5-phosphate reductoisomerase (398 aa).

The NADPH site is built by Thr-10, Gly-11, Ser-12, Ile-13, Gly-36, Lys-37, Asn-38, and Asn-124. Position 125 (Lys-125) interacts with 1-deoxy-D-xylulose 5-phosphate. Glu-126 is an NADPH binding site. Residue Asp-150 participates in Mn(2+) binding. The 1-deoxy-D-xylulose 5-phosphate site is built by Ser-151, Glu-152, Ser-186, and His-209. A Mn(2+)-binding site is contributed by Glu-152. Residue Gly-215 participates in NADPH binding. Positions 222, 227, 228, and 231 each coordinate 1-deoxy-D-xylulose 5-phosphate. Glu-231 is a Mn(2+) binding site.

It belongs to the DXR family. Homodimer. It depends on Mg(2+) as a cofactor. The cofactor is Mn(2+).

It carries out the reaction 2-C-methyl-D-erythritol 4-phosphate + NADP(+) = 1-deoxy-D-xylulose 5-phosphate + NADPH + H(+). It participates in isoprenoid biosynthesis; isopentenyl diphosphate biosynthesis via DXP pathway; isopentenyl diphosphate from 1-deoxy-D-xylulose 5-phosphate: step 1/6. Functionally, catalyzes the NADPH-dependent rearrangement and reduction of 1-deoxy-D-xylulose-5-phosphate (DXP) to 2-C-methyl-D-erythritol 4-phosphate (MEP). The chain is 1-deoxy-D-xylulose 5-phosphate reductoisomerase from Escherichia coli O157:H7.